The chain runs to 269 residues: Putative pyruvate, phosphate dikinase regulatory protein (269 aa).

153–160 (GVSRTSKT) serves as a coordination point for ADP.

This sequence belongs to the pyruvate, phosphate/water dikinase regulatory protein family. PDRP subfamily.

It catalyses the reaction N(tele)-phospho-L-histidyl/L-threonyl-[pyruvate, phosphate dikinase] + ADP = N(tele)-phospho-L-histidyl/O-phospho-L-threonyl-[pyruvate, phosphate dikinase] + AMP + H(+). It carries out the reaction N(tele)-phospho-L-histidyl/O-phospho-L-threonyl-[pyruvate, phosphate dikinase] + phosphate + H(+) = N(tele)-phospho-L-histidyl/L-threonyl-[pyruvate, phosphate dikinase] + diphosphate. Functionally, bifunctional serine/threonine kinase and phosphorylase involved in the regulation of the pyruvate, phosphate dikinase (PPDK) by catalyzing its phosphorylation/dephosphorylation. This chain is Putative pyruvate, phosphate dikinase regulatory protein, found in Pediococcus pentosaceus (strain ATCC 25745 / CCUG 21536 / LMG 10740 / 183-1w).